Reading from the N-terminus, the 588-residue chain is Adenine deaminase (588 aa).

It belongs to the metallo-dependent hydrolases superfamily. Adenine deaminase family. As to quaternary structure, homodimer. It depends on Mn(2+) as a cofactor.

The catalysed reaction is adenine + H2O + H(+) = hypoxanthine + NH4(+). In Escherichia coli (strain SE11), this protein is Adenine deaminase.